The following is a 638-amino-acid chain: MSSTQQQQHQLFSAVEQNDVTKVKKLSSKKKISKSNLTSFDQYGQSALTIALKNNNEEMVELLLSLCVTLKADINTFDKNGFSALHQAVSSDDRILMRVLQYENINVDVQNDDLNTPIHYFCQKFRSPNCQEPFQLFIQKGVNVNAQNKNGETPLHKAIFNNSVRLMMVGLLLKNGANVNLATQFQESPLHYAVRLGREDLVSVLLKAGADVDCVGTKERKTPYQLAVEEGNKDMTARIKKYKDLFDWLQKHGFEQYKDAFLKEEMFLDELGEMSEDILNKMGITSTGTRLRILKETSNLANEQTKKPKTPELIIEEDPTPPDTPDISGLRHSLHTLRHVGEVNIINDNELEYTEKLGAGSSGKVYKGLYRGKEVAIKVLKSMTESKEIEEFKKEFQIMSAIRSKHVVHFYGAVLEPKLCMVMENCSRGSLYHVMDNNSLDIGWERTFRFAIETVRGIECLHKWDPPIVHRDLKSLNLLVNDKWEIKVCDFGLSRFNTGSNLETLVKMRGTFAYCAPEVYYGEQFSGKSDVYSIAVILWELVTRCINGRYERPFSEYKNLQHDFQIIIQTAKKNLRPTIPNACPESLVSLIQDCWDPNLENRPTCTDILSRLVTIENEYRSNIQTWNNLIVPLPKNQE.

6 ANK repeats span residues 43 to 72 (YGQS…TLKA), 80 to 109 (NGFS…NVDV), 113 to 146 (DLNT…NVNA), 150 to 181 (NGET…NVNL), 185 to 214 (FQES…DVDC), and 219 to 248 (ERKT…LFDW). Positions 240–303 (KKYKDLFDWL…LKETSNLANE (64 aa)) constitute an SAM domain. One can recognise a Protein kinase domain in the interval 351–620 (LEYTEKLGAG…RLVTIENEYR (270 aa)). Residues 357–365 (LGAGSSGKV) and Lys378 contribute to the ATP site. The active-site Proton acceptor is Asp472.

The protein belongs to the protein kinase superfamily. TKL Ser/Thr protein kinase family. As to quaternary structure, interacts with F-actin. In terms of processing, autophosphorylated.

It localises to the cytoplasm. It is found in the cytoskeleton. The catalysed reaction is L-seryl-[protein] + ATP = O-phospho-L-seryl-[protein] + ADP + H(+). It catalyses the reaction L-threonyl-[protein] + ATP = O-phospho-L-threonyl-[protein] + ADP + H(+). In terms of biological role, may be involved in cortical F-actin organization and resistance to osmotic stress. Activated upon cell detachment, in vitro. The sequence is that of Stress-activated protein kinase alpha (spkA-1) from Dictyostelium discoideum (Social amoeba).